The chain runs to 544 residues: Chaperonin GroEL (544 aa).

Residues 30-33 (TLGP), K51, 87-91 (DGTTT), G415, 479-481 (NAA), and D495 each bind ATP.

It belongs to the chaperonin (HSP60) family. As to quaternary structure, forms a cylinder of 14 subunits composed of two heptameric rings stacked back-to-back. Interacts with the co-chaperonin GroES.

The protein localises to the cytoplasm. The enzyme catalyses ATP + H2O + a folded polypeptide = ADP + phosphate + an unfolded polypeptide.. In terms of biological role, together with its co-chaperonin GroES, plays an essential role in assisting protein folding. The GroEL-GroES system forms a nano-cage that allows encapsulation of the non-native substrate proteins and provides a physical environment optimized to promote and accelerate protein folding. This chain is Chaperonin GroEL, found in Francisella tularensis subsp. tularensis (strain SCHU S4 / Schu 4).